Here is a 99-residue protein sequence, read N- to C-terminus: YcgL domain-containing protein HD_1373 (99 aa).

Positions 8 to 92 (NFCAIYKSMS…PAENLLKQFL (85 aa)) constitute a YcgL domain.

The protein is YcgL domain-containing protein HD_1373 of Haemophilus ducreyi (strain 35000HP / ATCC 700724).